The following is a 493-amino-acid chain: MDTPTPNITNEALTVRGKERYRSGVLEYRKMGYWEPDYEPKITDVISLFRITPQDGVDPVEAAAAVAGESSTATWTVVWTDRLTACEKYRAKAYRVDPVPNAPGQYFAYIAYDLALFEPGSIANLTASIIGNVFGFKPLKALRLEDMRLPVAYVKTFDGPATGIVVERERLDKFGRPLLGATVKPKLGLSGRNYGRVVYEALKGGLDFTKDDENINSQPFMHWRDRFLYCMEAVNKAQAATGEVKGTYLNVTAGTMEDMYERASFAHELGSSIIMIDLVIGYTAIQSMSKWARKHDMILHLHRAGHGTYTRHKTHGVSFRVISKWMRLAGVDHIHAGTVVGKLEGDPLTTRGFYDILREDYNETRYEHGIFFDQDWAGTRKVMPVASGGIHAGQMHQLLHHLGEDVVLQFGGGTIGHPQGIAAGAMANRVALEAMILARNEGRDYLAEGPQILNDAARHCLPLRQALDTWGEVTFNYASTDTPDFVPTAMPAY.

2 residues coordinate substrate: asparagine 132 and threonine 182. The Proton acceptor role is filled by lysine 184. Lysine 186 serves as a coordination point for substrate. Residues lysine 210, aspartate 212, and glutamate 213 each contribute to the Mg(2+) site. Residue lysine 210 is modified to N6-carboxylysine. Histidine 302 functions as the Proton acceptor in the catalytic mechanism. The substrate site is built by arginine 303, histidine 335, and serine 387.

It belongs to the RuBisCO large chain family. Type I subfamily. In terms of assembly, heterohexadecamer of 8 large chains and 8 small chains. Requires Mg(2+) as cofactor.

The catalysed reaction is 2 (2R)-3-phosphoglycerate + 2 H(+) = D-ribulose 1,5-bisphosphate + CO2 + H2O. It catalyses the reaction D-ribulose 1,5-bisphosphate + O2 = 2-phosphoglycolate + (2R)-3-phosphoglycerate + 2 H(+). RuBisCO catalyzes two reactions: the carboxylation of D-ribulose 1,5-bisphosphate, the primary event in carbon dioxide fixation, as well as the oxidative fragmentation of the pentose substrate. Both reactions occur simultaneously and in competition at the same active site. This chain is Ribulose bisphosphate carboxylase large chain, found in Acidiphilium cryptum (strain JF-5).